We begin with the raw amino-acid sequence, 242 residues long: Probable transcriptional regulatory protein PXO_01555 (242 aa).

The protein belongs to the TACO1 family.

Its subcellular location is the cytoplasm. This is Probable transcriptional regulatory protein PXO_01555 from Xanthomonas oryzae pv. oryzae (strain PXO99A).